The primary structure comprises 562 residues: Glutamine--tRNA ligase (562 aa).

A 'HIGH' region motif is present at residues 35-45 (PEPNGYLHIGH). ATP-binding positions include 36 to 38 (EPN) and 42 to 48 (HIGHAKS). D68 and Y213 together coordinate L-glutamine. Residues T232 and 264 to 265 (RL) each bind ATP. A 'KMSKS' region motif is present at residues 271–275 (ITSKR).

Belongs to the class-I aminoacyl-tRNA synthetase family. As to quaternary structure, monomer.

Its subcellular location is the cytoplasm. The enzyme catalyses tRNA(Gln) + L-glutamine + ATP = L-glutaminyl-tRNA(Gln) + AMP + diphosphate. In Neisseria gonorrhoeae (strain ATCC 700825 / FA 1090), this protein is Glutamine--tRNA ligase.